The following is a 1151-amino-acid chain: Phospholipid-transporting ATPase NEO1 (1151 aa).

Disordered regions lie at residues Met-1 to Gln-21 and Leu-73 to Leu-95. At Met-1 to Thr-184 the chain is on the extracellular side. A compositionally biased stretch (polar residues) spans Gln-12–Gln-21. Residues Glu-51–Asp-104 are required for endosome-to-Golgi sorting. The residue at position 102 (Ser-102) is a Phosphoserine. A helical transmembrane segment spans residues Phe-185–Val-205. Residues Ala-206–Gln-209 are Cytoplasmic-facing. The helical transmembrane segment at Ala-210–Leu-230 threads the bilayer. The Extracellular segment spans residues Thr-231–Thr-367. The chain crosses the membrane as a helical span at residues Leu-368–Gly-388. Residues Arg-389–Lys-416 lie on the Cytoplasmic side of the membrane. A helical transmembrane segment spans residues Ile-417–Asn-437. A topological domain (extracellular) is located at residue Asp-438. Residues Asp-439–Leu-459 form a helical membrane-spanning segment. Residues Arg-460–Gly-947 are Cytoplasmic-facing. Catalysis depends on Asp-503, which acts as the 4-aspartylphosphate intermediate. Positions 503, 504, and 505 each coordinate ATP. Asp-503 contributes to the Mg(2+) binding site. Thr-505 contacts Mg(2+). Ser-551 is subject to Phosphoserine. ATP is bound by residues Glu-597, Phe-640, Ser-642, Lys-645, Lys-664, Arg-693, Thr-694, Thr-774, Gly-775, Asp-776, Arg-856, and Lys-862. Asp-882 serves as a coordination point for Mg(2+). Residues Asn-885 and Asp-886 each contribute to the ATP site. Mg(2+) is bound at residue Asp-886. A helical membrane pass occupies residues Leu-948–Leu-968. Topologically, residues Tyr-969–Gln-970 are extracellular. Residues Gly-971 to Leu-991 form a helical membrane-spanning segment. At Asp-992–Thr-1020 the chain is on the cytoplasmic side. The chain crosses the membrane as a helical span at residues Phe-1021–Ala-1041. At Phe-1042–Arg-1052 the chain is on the extracellular side. A helical transmembrane segment spans residues Met-1053–Ile-1073. Over Tyr-1074 to Lys-1078 the chain is Cytoplasmic. The helical transmembrane segment at Thr-1079–Gly-1099 threads the bilayer. At Asp-1100 to Thr-1109 the chain is on the extracellular side. The chain crosses the membrane as a helical span at residues Val-1110–Ala-1130. Residues Lys-1131–Pro-1151 are Cytoplasmic-facing. The required for endosomal targeting stretch occupies residues Lys-1131–Pro-1151.

Belongs to the cation transport ATPase (P-type) (TC 3.A.3) family. Type IV subfamily. In terms of assembly, interacts with MON2. Interacts with ANY1. Functions without a CDC50/LEM3 family accessory subunit. It depends on Mg(2+) as a cofactor.

It localises to the endosome membrane. It is found in the golgi apparatus membrane. The catalysed reaction is ATP + H2O + phospholipidSide 1 = ADP + phosphate + phospholipidSide 2.. It catalyses the reaction a 1,2-diacyl-sn-glycero-3-phospho-L-serine(out) + ATP + H2O = a 1,2-diacyl-sn-glycero-3-phospho-L-serine(in) + ADP + phosphate + H(+). It carries out the reaction a 1,2-diacyl-sn-glycero-3-phosphoethanolamine(out) + ATP + H2O = a 1,2-diacyl-sn-glycero-3-phosphoethanolamine(in) + ADP + phosphate + H(+). Functionally, flippase that catalyzes the hydrolysis of ATP coupled to the transport of lysophosphatidylserine, phosphatidylethanolamine, and phosphatidylserine from the lumenal to the cytosolic leaflet of the Golgi apparatus membrane and ensures the maintenance of asymmetric distribution of phospholipids. Does not appear to transport phosphatidylcholine or sphingomyelin. May be involved in recycling from endosomes by driving the formation of SNX3-dependent recycling tubules. Required for COPI retrograde transport from the Golgi to the endoplasmic reticulum, Golgi-endosome trafficking, and Golgi-dependent protein glycosylation. This Saccharomyces cerevisiae (strain ATCC 204508 / S288c) (Baker's yeast) protein is Phospholipid-transporting ATPase NEO1.